We begin with the raw amino-acid sequence, 399 residues long: Bombesin receptor subtype-3 (399 aa).

The Extracellular segment spans residues 1–41; the sequence is MAQRQPHSPNQTLISITNDTESSSSVVSNDNTNKGWSGDNS. 2 N-linked (GlcNAc...) asparagine glycosylation sites follow: N10 and N18. The chain crosses the membrane as a helical span at residues 42 to 63; sequence PGIEALCAIYITYAVIISVGIL. At 64–82 the chain is on the cytoplasmic side; sequence GNAILIKVFFKTKSMQTVP. A helical membrane pass occupies residues 83–103; the sequence is NIFITSLAFGDLLLLLTCVPV. At 104-121 the chain is on the extracellular side; it reads DATHYLAEGWLFGRIGCK. An intrachain disulfide couples C120 to C203. Residues 122-143 form a helical membrane-spanning segment; sequence VLSFIRLTSVGVSVFTLTILSA. Residues 144–163 are Cytoplasmic-facing; it reads DRYKAVVKPLERQPSNAILK. The helical transmembrane segment at 164 to 184 threads the bilayer; it reads TCVKAGCVWIVSMIFALPEAI. The Extracellular portion of the chain corresponds to 185 to 220; the sequence is FSNVYTFRDPNKNMTFESCTSYPVSKKLLQEIHSLL. The chain crosses the membrane as a helical span at residues 221–241; it reads CFLVFYIIPLSIISVYYSLIA. Over 242–272 the chain is Cytoplasmic; sequence RTLYKSTLNIPTEEQSHARKQIESRKRIART. The chain crosses the membrane as a helical span at residues 273-293; that stretch reads VLVLVALFALCWLPNHLLYLY. Over 294 to 313 the chain is Extracellular; sequence HSFTSQTYVDPSAMHFIFTI. The chain crosses the membrane as a helical span at residues 314–333; sequence FSRVLAFSNSCVNPFALYWL. The Cytoplasmic portion of the chain corresponds to 334-399; it reads SKSFQKHFKA…CSVKQAEDRF (66 aa). Residue C347 is the site of S-palmitoyl cysteine attachment.

This sequence belongs to the G-protein coupled receptor 1 family. As to quaternary structure, interacts with C6orf89. In terms of tissue distribution, in germ cells in testis. Lung carcinoma cells.

The protein resides in the cell membrane. Functionally, role in sperm cell division, maturation, or function. This receptor mediates its action by association with G proteins that activate a phosphatidylinositol-calcium second messenger system. The chain is Bombesin receptor subtype-3 (BRS3) from Homo sapiens (Human).